The following is a 229-amino-acid chain: UPF0758 protein CLH_0547 (229 aa).

In terms of domain architecture, MPN spans 107–229 (KIMSPNDIAM…FISLKEKGFI (123 aa)). The Zn(2+) site is built by H178, H180, and D191. Residues 178–191 (HNHPSGDPTPSKED) carry the JAMM motif motif.

This sequence belongs to the UPF0758 family.

The polypeptide is UPF0758 protein CLH_0547 (Clostridium botulinum (strain Alaska E43 / Type E3)).